The sequence spans 366 residues: Anthranilate phosphoribosyltransferase (366 aa).

5-phospho-alpha-D-ribose 1-diphosphate-binding positions include G103, 106–107, T111, 113–116, 131–139, and G143; these read GD, NLST, and KHGNRASSS. G103 is a binding site for anthranilate. Residue S115 coordinates Mg(2+). Residue N134 coordinates anthranilate. Residue R189 participates in anthranilate binding. The Mg(2+) site is built by D247 and E248.

The protein belongs to the anthranilate phosphoribosyltransferase family. Homodimer. The cofactor is Mg(2+).

The enzyme catalyses N-(5-phospho-beta-D-ribosyl)anthranilate + diphosphate = 5-phospho-alpha-D-ribose 1-diphosphate + anthranilate. It functions in the pathway amino-acid biosynthesis; L-tryptophan biosynthesis; L-tryptophan from chorismate: step 2/5. Functionally, catalyzes the transfer of the phosphoribosyl group of 5-phosphorylribose-1-pyrophosphate (PRPP) to anthranilate to yield N-(5'-phosphoribosyl)-anthranilate (PRA). This chain is Anthranilate phosphoribosyltransferase, found in Mycobacterium leprae (strain Br4923).